A 279-amino-acid polypeptide reads, in one-letter code: B3 domain-containing protein Os11g0156000 (279 aa).

The segment at residues 38–144 (FEKPLTPSDV…DRLFIGCRRR (107 aa)) is a DNA-binding region (TF-B3). Disordered stretches follow at residues 148–182 (AAAQ…YSTS) and 203–228 (HDHG…AGSA). A compositionally biased stretch (low complexity) spans 159 to 168 (VRVAPAAQNA). Residues 203–219 (HDHGDMHHADESPRDTD) show a composition bias toward basic and acidic residues.

Its subcellular location is the nucleus. The chain is B3 domain-containing protein Os11g0156000 from Oryza sativa subsp. japonica (Rice).